Reading from the N-terminus, the 335-residue chain is ATP-dependent 6-phosphofructokinase (335 aa).

ATP is bound at residue glycine 11. 21 to 25 contributes to the ADP binding site; it reads RAVVR. ATP contacts are provided by residues 72-73 and 102-105; these read RY and GDGS. Aspartate 103 contacts Mg(2+). A substrate-binding site is contributed by 125–127; the sequence is TID. The active-site Proton acceptor is the aspartate 127. Arginine 154 is an ADP binding site. Residues arginine 162 and 169 to 171 contribute to the substrate site; that span reads MGR. ADP contacts are provided by residues 185–187 and 213–215; these read GAD and KKH. Substrate is bound by residues glutamate 222, arginine 244, and 250–253; that span reads HIQR.

This sequence belongs to the phosphofructokinase type A (PFKA) family. ATP-dependent PFK group I subfamily. Prokaryotic clade 'B1' sub-subfamily. In terms of assembly, homotetramer. The cofactor is Mg(2+).

It is found in the cytoplasm. The catalysed reaction is beta-D-fructose 6-phosphate + ATP = beta-D-fructose 1,6-bisphosphate + ADP + H(+). Its pathway is carbohydrate degradation; glycolysis; D-glyceraldehyde 3-phosphate and glycerone phosphate from D-glucose: step 3/4. With respect to regulation, allosterically activated by ADP and other diphosphonucleosides, and allosterically inhibited by phosphoenolpyruvate. Functionally, catalyzes the phosphorylation of D-fructose 6-phosphate to fructose 1,6-bisphosphate by ATP, the first committing step of glycolysis. This Streptococcus pneumoniae (strain CGSP14) protein is ATP-dependent 6-phosphofructokinase.